A 147-amino-acid chain; its full sequence is MKFTKSLLLLIVAVFASSNAAETFSNFQVTNSDANSPCVTTPVELKVNTCQSACGSILNVLPVTGSTSKFTFNQFGAQDTKCAATPTSSNEFTCVDGKSKVAIGTTTYSVVCVPDKTNSSESDSSDSTRIGASFALAASVLLSMLAI.

Residues 1 to 20 (MKFTKSLLLLIVAVFASSNA) form the signal peptide. Asparagine 118 is lipidated: GPI-like-anchor amidated asparagine. Asparagine 118 carries an N-linked (GlcNAc...) asparagine glycan. A propeptide spans 119–147 (SSESDSSDSTRIGASFALAASVLLSMLAI) (removed in mature form).

It belongs to the ponticulin family. Post-translationally, the GPI-like-anchor contains a phosphoceramide group, rather than a phosphatidyl group.

The protein resides in the cell membrane. In Dictyostelium discoideum (Social amoeba), this protein is Ponticulin-like protein C1 (ponC1).